We begin with the raw amino-acid sequence, 125 residues long: MIQAFLVALGGAIGSVLRYYVGQWALRLMGPAFPWGTLAVNVVGCFVIGVFAELIARRFNASMELRLLLITGFLGGFTTFSAFSLDAISLFERGEAVAGGIYIAASVGLSMAAVISGLAVMRALA.

4 helical membrane-spanning segments follow: residues 1–21 (MIQA…RYYV), 32–52 (AFPW…GVFA), 68–88 (LLIT…LDAI), and 101–121 (IYIA…LAVM). The Na(+) site is built by G75 and T78.

It belongs to the fluoride channel Fluc/FEX (TC 1.A.43) family.

It localises to the cell inner membrane. It catalyses the reaction fluoride(in) = fluoride(out). With respect to regulation, na(+) is not transported, but it plays an essential structural role and its presence is essential for fluoride channel function. Functionally, fluoride-specific ion channel. Important for reducing fluoride concentration in the cell, thus reducing its toxicity. This Rhizobium etli (strain CIAT 652) protein is Fluoride-specific ion channel FluC.